Consider the following 907-residue polypeptide: Isoleucine--tRNA ligase (907 aa).

The 'HIGH' region motif lies at 57–67 (PFANGKAHMGS). Glu549 is an L-isoleucyl-5'-AMP binding site. Positions 590 to 594 (KLSKS) match the 'KMSKS' region motif. Residue Lys593 coordinates ATP. 4 residues coordinate Zn(2+): Cys867, Cys870, Cys889, and Cys892.

This sequence belongs to the class-I aminoacyl-tRNA synthetase family. IleS type 1 subfamily. Monomer. Zn(2+) serves as cofactor.

The protein resides in the cytoplasm. It carries out the reaction tRNA(Ile) + L-isoleucine + ATP = L-isoleucyl-tRNA(Ile) + AMP + diphosphate. In terms of biological role, catalyzes the attachment of isoleucine to tRNA(Ile). As IleRS can inadvertently accommodate and process structurally similar amino acids such as valine, to avoid such errors it has two additional distinct tRNA(Ile)-dependent editing activities. One activity is designated as 'pretransfer' editing and involves the hydrolysis of activated Val-AMP. The other activity is designated 'posttransfer' editing and involves deacylation of mischarged Val-tRNA(Ile). The sequence is that of Isoleucine--tRNA ligase from Methylacidiphilum infernorum (isolate V4) (Methylokorus infernorum (strain V4)).